Reading from the N-terminus, the 145-residue chain is Peroxide operon regulator (145 aa).

Residues 1–78 (MAAHELKEAL…SGLVKELTYG (78 aa)) are DNA-binding. Zn(2+)-binding residues include C96, C99, C136, and C139.

The protein belongs to the Fur family. In terms of assembly, homodimer. The cofactor is Mn(2+). Fe(2+) serves as cofactor. It depends on Zn(2+) as a cofactor. Possibly oxidized on a cysteine residue; the Cys-SOH formed in response to oxidative signaling may rapidly react with a Cys-SH to form a disulfide bond, leading to the loss of metal ion and inactivation of repressor function. Oxidized PerR can be further reduced by thiol reductants and repressor activity restored.

It is found in the cytoplasm. Its function is as follows. Hydrogen and organic peroxide sensor. Represses the expression of a regulon of peroxide-inducible genes such as katA, ahpC, ahpF, the heme biosynthesis operon (hemAXCDBL), fur, perR, zosA and mrgA. In Bacillus subtilis (strain 168), this protein is Peroxide operon regulator (perR).